Here is a 79-residue protein sequence, read N- to C-terminus: Translational regulator CsrA (79 aa).

This sequence belongs to the CsrA/RsmA family. In terms of assembly, homodimer; the beta-strands of each monomer intercalate to form a hydrophobic core, while the alpha-helices form wings that extend away from the core.

Its subcellular location is the cytoplasm. In terms of biological role, a translational regulator that binds mRNA to regulate translation initiation and/or mRNA stability. Usually binds in the 5'-UTR at or near the Shine-Dalgarno sequence preventing ribosome-binding, thus repressing translation. Its main target seems to be the major flagellin gene, while its function is anatagonized by FliW. The polypeptide is Translational regulator CsrA (Maridesulfovibrio salexigens (strain ATCC 14822 / DSM 2638 / NCIMB 8403 / VKM B-1763) (Desulfovibrio salexigens)).